The primary structure comprises 441 residues: 2-oxoisovalerate dehydrogenase subunit alpha, mitochondrial (441 aa).

The N-terminal 17 residues, 1-17, are a transit peptide targeting the mitochondrion; it reads MISQSYRILSRISRNNE. 145–147 lines the thiamine diphosphate pocket; that stretch reads QYR. Ser194, Thr199, and Gln200 together coordinate K(+).

This sequence belongs to the BCKDHA family. In terms of assembly, heterotetramer of alpha and beta chains. Thiamine diphosphate is required as a cofactor.

It localises to the mitochondrion matrix. It carries out the reaction N(6)-[(R)-lipoyl]-L-lysyl-[protein] + 3-methyl-2-oxobutanoate + H(+) = N(6)-[(R)-S(8)-2-methylpropanoyldihydrolipoyl]-L-lysyl-[protein] + CO2. The branched-chain alpha-keto dehydrogenase complex catalyzes the overall conversion of alpha-keto acids to acyl-CoA and CO(2). It contains multiple copies of three enzymatic components: branched-chain alpha-keto acid decarboxylase (E1), lipoamide acyltransferase (E2) and lipoamide dehydrogenase (E3). The polypeptide is 2-oxoisovalerate dehydrogenase subunit alpha, mitochondrial (bkdA) (Dictyostelium discoideum (Social amoeba)).